The primary structure comprises 595 residues: Aspartate--tRNA ligase (595 aa).

Glutamate 171 provides a ligand contact to L-aspartate. Residues 195–198 are aspartate; it reads QLFK. Arginine 217 is an L-aspartate binding site. Residues 217 to 219 and glutamine 226 each bind ATP; that span reads RDE. Residue histidine 448 coordinates L-aspartate. Glutamate 482 serves as a coordination point for ATP. Arginine 489 provides a ligand contact to L-aspartate. An ATP-binding site is contributed by 534 to 537; it reads GLDR.

This sequence belongs to the class-II aminoacyl-tRNA synthetase family. Type 1 subfamily. In terms of assembly, homodimer.

The protein resides in the cytoplasm. It catalyses the reaction tRNA(Asp) + L-aspartate + ATP = L-aspartyl-tRNA(Asp) + AMP + diphosphate. Functionally, catalyzes the attachment of L-aspartate to tRNA(Asp) in a two-step reaction: L-aspartate is first activated by ATP to form Asp-AMP and then transferred to the acceptor end of tRNA(Asp). This chain is Aspartate--tRNA ligase, found in Erwinia tasmaniensis (strain DSM 17950 / CFBP 7177 / CIP 109463 / NCPPB 4357 / Et1/99).